Here is a 400-residue protein sequence, read N- to C-terminus: Double C2-like domain-containing protein alpha (400 aa).

An interaction with UNC13D and DYNLT1 region spans residues 1–89; the sequence is MRGRRGDRMT…DSYDSDDATA (89 aa). C2 domains are found at residues 89 to 211 and 251 to 384; these read ALGT…HFNI and ERGR…ERWH. Residues Asp120, Asp126, Asp181, Asp183, Asp282, Asp288, Asp342, Asp344, and Asp350 each coordinate Ca(2+). The interval 215–400 is interaction with UNC13D; that stretch reads RQVPLASPSS…PPAAGALSSA (186 aa).

Interacts (via N-terminus) with UNC13A. Interacts with cytoplasmic dynein light chain DYNLT1. Interacts with UNC13D. It depends on Ca(2+) as a cofactor. Predominantly expressed in brain. Also expressed in testis.

It localises to the lysosome. Its subcellular location is the cytoplasmic vesicle. It is found in the secretory vesicle. The protein localises to the synaptic vesicle membrane. The protein resides in the synapse. It localises to the synaptosome. In terms of biological role, calcium sensor which most probably regulates fusion of vesicles with membranes. Binds calcium and phospholipids. May be involved in calcium dependent neurotransmitter release through the interaction with UNC13A. May be involved in calcium-dependent spontaneous release of neurotransmitter in absence of action potentials in neuronal cells. Regulates Ca(2+)-dependent secretory lysosome exocytosis in mast cells. The sequence is that of Double C2-like domain-containing protein alpha (DOC2A) from Homo sapiens (Human).